The primary structure comprises 379 residues: Bifunctional enzyme IspD/IspF (379 aa).

The tract at residues 1–213 is 2-C-methyl-D-erythritol 4-phosphate cytidylyltransferase; it reads MSQVSLVVMG…QGFEPPFGGC (213 aa). The segment at 214-379 is 2-C-methyl-D-erythritol 2,4-cyclodiphosphate synthase; it reads YGGSGFDVHA…DWTKHACFNR (166 aa). A divalent metal cation contacts are provided by D220 and H222. 4-CDP-2-C-methyl-D-erythritol 2-phosphate-binding positions include 220-222 and 246-247; these read DVH and HS. H254 serves as a coordination point for a divalent metal cation. Residues 268-270, 273-277, 344-347, F351, and R354 contribute to the 4-CDP-2-C-methyl-D-erythritol 2-phosphate site; these read DIG, FPDSD, and TTTE.

This sequence in the N-terminal section; belongs to the IspD/TarI cytidylyltransferase family. IspD subfamily. In the C-terminal section; belongs to the IspF family. It depends on a divalent metal cation as a cofactor.

It catalyses the reaction 2-C-methyl-D-erythritol 4-phosphate + CTP + H(+) = 4-CDP-2-C-methyl-D-erythritol + diphosphate. The catalysed reaction is 4-CDP-2-C-methyl-D-erythritol 2-phosphate = 2-C-methyl-D-erythritol 2,4-cyclic diphosphate + CMP. Its pathway is isoprenoid biosynthesis; isopentenyl diphosphate biosynthesis via DXP pathway; isopentenyl diphosphate from 1-deoxy-D-xylulose 5-phosphate: step 2/6. It functions in the pathway isoprenoid biosynthesis; isopentenyl diphosphate biosynthesis via DXP pathway; isopentenyl diphosphate from 1-deoxy-D-xylulose 5-phosphate: step 4/6. In terms of biological role, bifunctional enzyme that catalyzes the formation of 4-diphosphocytidyl-2-C-methyl-D-erythritol from CTP and 2-C-methyl-D-erythritol 4-phosphate (MEP) (IspD), and catalyzes the conversion of 4-diphosphocytidyl-2-C-methyl-D-erythritol 2-phosphate (CDP-ME2P) to 2-C-methyl-D-erythritol 2,4-cyclodiphosphate (ME-CPP) with a corresponding release of cytidine 5-monophosphate (CMP) (IspF). In Wolinella succinogenes (strain ATCC 29543 / DSM 1740 / CCUG 13145 / JCM 31913 / LMG 7466 / NCTC 11488 / FDC 602W) (Vibrio succinogenes), this protein is Bifunctional enzyme IspD/IspF.